The primary structure comprises 290 residues: Short chain dehydrogenase andI (290 aa).

Positions 35, 120, 154, 186, 190, 219, and 221 each coordinate NADP(+). Residue Tyr-186 is the Proton acceptor of the active site. The active-site Lowers pKa of active site Tyr is the Lys-190.

Belongs to the short-chain dehydrogenases/reductases (SDR) family.

The protein operates within secondary metabolite biosynthesis; terpenoid biosynthesis. Functionally, short chain dehydrogenase; part of the gene cluster that mediates the biosynthesis of anditomin, a fungal meroterpenoid. The first step of the pathway is the synthesis of 3,5-dimethylorsellinic acid (DMOA) by the polyketide synthase andM. DMOA is then converted to the phthalide compound 5,7-dihydroxy-4,6-dimethylphthalide (DHDMP) by the cytochrome P450 monooxygenase andK, which is further prenylated by the prenyltransferase andD to yield farnesyl-DHDMP. Further epoxidation by the FAD-dependent monooxygenase andE leads to epoxyfarnesyl-DHDMP. The next step involves the terpene cyclase andB that converts epoxyfarnesyl-DHDMP into preandiloid A through opening of the epoxide ring followed by the cyclization of the farnesyl moiety. Preandiloid A is in turn oxidized at the C-3 hydroxyl group to yield preandiloid B by the dehydrogenase andC. The dioxygenase andA is solely responsible for the dehydrogenation of preandiloid B leading to the enone preandiloid C, as well as for the intriguing structural rearrangement to generate the bicyclo[2.2.2]octane core, transforming preandiloid C into andiconin. FAD-binding monooxygenase andJ then produces andilesin D which is reduced by dehydrogenase andI to yield andilesin A. Action of acetyltransferase andG followed by a spontaneous acetate elimination leads then to andilesin B, which is in turn substrate of the short chain dehydrogenase andH to yield andilesin C. Finally, the dioxygenase andF catalyzes the transformation of andilesin C to anditomin. The chain is Short chain dehydrogenase andI from Emericella variicolor (Aspergillus stellatus).